The chain runs to 582 residues: Poly(A) RNA polymerase, mitochondrial (582 aa).

The transit peptide at 1 to 37 (MAVPGVGLLTRLNLCARRRTRVQRPIVRLLSCPGTVA) directs the protein to the mitochondrion. Lysine 90 is subject to N6-acetyllysine. ATP contacts are provided by residues 107-109 (YES) and 241-242 (GC). Mg(2+)-binding residues include aspartate 243 and aspartate 245. Residues 437–483 (LELLLKEFFEYFGNFAFDKNSINIRQGREQNKPDSSPLYIQNPFETS) enclose the PAP-associated domain.

The protein belongs to the DNA polymerase type-B-like family. Homodimer. It depends on Mg(2+) as a cofactor. Requires Mn(2+) as cofactor. Ubiquitous, with stronger expression in tissues with high energy requirements: heart, brain, and skeletal muscle.

The protein localises to the cytoplasm. Its subcellular location is the mitochondrion. The enzyme catalyses RNA(n) + ATP = RNA(n)-3'-adenine ribonucleotide + diphosphate. Polymerase that creates the 3' poly(A) tail of mitochondrial transcripts. Can use all four nucleotides, but has higher activity with ATP and UTP (in vitro). Plays a role in replication-dependent histone mRNA degradation. May be involved in the terminal uridylation of mature histone mRNAs before their degradation is initiated. Might be responsible for the creation of some UAA stop codons which are not encoded in mtDNA. The polypeptide is Poly(A) RNA polymerase, mitochondrial (MTPAP) (Homo sapiens (Human)).